The primary structure comprises 148 residues: DNA-directed RNA polymerase II subunit GRINL1A, isoforms 4/5 (148 aa).

Residues 1–66 are disordered; sequence MATPARAPES…AEFGGAAGNV (66 aa). Residues 53 to 66 are compositionally biased toward low complexity; sequence GLGAAEFGGAAGNV.

This is DNA-directed RNA polymerase II subunit GRINL1A, isoforms 4/5 (POLR2M) from Homo sapiens (Human).